A 212-amino-acid polypeptide reads, in one-letter code: Pyridoxine/pyridoxamine 5'-phosphate oxidase (212 aa).

Residues 8–11 (RRSY) and lysine 66 contribute to the substrate site. Residues 61–66 (RIVLLK), 76–77 (FT), arginine 82, lysine 83, and glutamine 105 each bind FMN. Residues tyrosine 123, arginine 127, and serine 131 each coordinate substrate. Residues 140–141 (QS) and tryptophan 184 each bind FMN. Position 190–192 (190–192 (RLH)) interacts with substrate. Residue arginine 194 coordinates FMN.

Belongs to the pyridoxamine 5'-phosphate oxidase family. As to quaternary structure, homodimer. Requires FMN as cofactor.

It carries out the reaction pyridoxamine 5'-phosphate + O2 + H2O = pyridoxal 5'-phosphate + H2O2 + NH4(+). It catalyses the reaction pyridoxine 5'-phosphate + O2 = pyridoxal 5'-phosphate + H2O2. The protein operates within cofactor metabolism; pyridoxal 5'-phosphate salvage; pyridoxal 5'-phosphate from pyridoxamine 5'-phosphate: step 1/1. Its pathway is cofactor metabolism; pyridoxal 5'-phosphate salvage; pyridoxal 5'-phosphate from pyridoxine 5'-phosphate: step 1/1. Catalyzes the oxidation of either pyridoxine 5'-phosphate (PNP) or pyridoxamine 5'-phosphate (PMP) into pyridoxal 5'-phosphate (PLP). The sequence is that of Pyridoxine/pyridoxamine 5'-phosphate oxidase from Cupriavidus necator (strain ATCC 17699 / DSM 428 / KCTC 22496 / NCIMB 10442 / H16 / Stanier 337) (Ralstonia eutropha).